Reading from the N-terminus, the 1032-residue chain is MTDTTDDIAEEISFQSFEDDCKLLGSLFHDVLQREVGNPFMEKVERIRILAQSALNLRMAGIEDTANLLEKQLTSEISKMPLEEALTLARTFTHSLNLMGIADTHHRMHKVHNVTQLARSCDDIFSQLLQSGISPDELYKTVCKQEVEIVLTAHPTQINRRTLQYKHIRIAHLLEYNTRSDLSVEDRETLIEDLVREITSLWQTDELRRQKPTPVDEARAGLNIVEQSLWKAVPQYLRRVSNSLKKFTGKPLPLTCTPMKFGSWMGGDRDGNPNVTAKVTKEVSLLSRWMAIDLYIREVDSLRFELSTDRCSDRFSRLADKILEKDYDRGKSNFQKQQSSSCLPTQLPARAHLPACIDFGESRHTKFEIATTDYMPPNLQKQNEQDFSESDWEKIDNGSRSGLTSRGSFSSTSQLLLQRKLFEESQVGKTSFQKLLEPPPLKRAGSAPYRIVLGEVKEKLVKTRRLLELLIEGLPCEYDPKNSYETSDQLLEPLLLCYESLQSSGARVLADGRLADLIRRVSTFGMVLVKLDLRQEAARHSEALDAITTYLDMGTYSEWDEEKKLEFLTRELKGKRPLVPQCIKVGPDVKEVLDTFRVAAELGSESLGAYVISMASNASDVLAVELLQKDARLALTSEHGKPCPGGTLRVVPLFETVNDLRAAGPSIRKLLSIDWYREHIQKNHNGHQEVMVGYSDSGKDAGRFTAAWELYKAQENVVAACNEFGIKITLFHGRGGSIGRGGGPTYLAIQSQPPGSVMGSLRSTEQGEMVQAKFGIPQTAVRQLEVYTTAVLLATLKPPQPPREEKWRNLMEEISGISCQHYRSTVYENPEFLSYFHEATPQAELGFLNIGSRPTRRKSSSGIGHLRAIPWVFAWTQTRFVLPAWLGVGAGLKGVSEKGHADDLKEMYKEWPFFQSTLELIEMVLAKADIPMTKHYDEQLVSEKRRGLGTELRKELMTTEKYVLVISGHEKLLQDNKSLKKLIDSRLPYLNAMNMLQVEILKRLRRDEDNNKLRDALLITINGIAAGMRNTG.

The active site involves His-154. Residues 377-407 form a disordered region; sequence PNLQKQNEQDFSESDWEKIDNGSRSGLTSRG. The segment covering 398–407 has biased composition (polar residues); it reads GSRSGLTSRG. Lys-699 is a catalytic residue.

It belongs to the PEPCase type 1 family. As to quaternary structure, homotetramer. The cofactor is Mg(2+). As to expression, expressed at low levels in flowers and siliques, and detectable in roots.

It is found in the cytoplasm. The catalysed reaction is oxaloacetate + phosphate = phosphoenolpyruvate + hydrogencarbonate. In terms of biological role, through the carboxylation of phosphoenolpyruvate (PEP) it forms oxaloacetate, a four-carbon dicarboxylic acid source for the tricarboxylic acid cycle. The polypeptide is Phosphoenolpyruvate carboxylase 4 (PPC4) (Arabidopsis thaliana (Mouse-ear cress)).